The primary structure comprises 177 residues: Adenine phosphoribosyltransferase (177 aa).

The protein belongs to the purine/pyrimidine phosphoribosyltransferase family. In terms of assembly, homodimer.

The protein resides in the cytoplasm. It catalyses the reaction AMP + diphosphate = 5-phospho-alpha-D-ribose 1-diphosphate + adenine. The protein operates within purine metabolism; AMP biosynthesis via salvage pathway; AMP from adenine: step 1/1. In terms of biological role, catalyzes a salvage reaction resulting in the formation of AMP, that is energically less costly than de novo synthesis. In Rhodococcus opacus (strain B4), this protein is Adenine phosphoribosyltransferase.